A 304-amino-acid polypeptide reads, in one-letter code: Quinolinate synthase 1 (304 aa).

Residues histidine 24 and serine 41 each coordinate iminosuccinate. Cysteine 86 lines the [4Fe-4S] cluster pocket. Residues 112–114 (YVN) and serine 129 each bind iminosuccinate. Position 171 (cysteine 171) interacts with [4Fe-4S] cluster. Iminosuccinate is bound by residues 197 to 199 (HPE) and threonine 214. Cysteine 259 provides a ligand contact to [4Fe-4S] cluster.

It belongs to the quinolinate synthase family. Type 2 subfamily. Requires [4Fe-4S] cluster as cofactor.

It localises to the cytoplasm. The enzyme catalyses iminosuccinate + dihydroxyacetone phosphate = quinolinate + phosphate + 2 H2O + H(+). It participates in cofactor biosynthesis; NAD(+) biosynthesis; quinolinate from iminoaspartate: step 1/1. Functionally, catalyzes the condensation of iminoaspartate with dihydroxyacetone phosphate to form quinolinate. This Methanosarcina acetivorans (strain ATCC 35395 / DSM 2834 / JCM 12185 / C2A) protein is Quinolinate synthase 1.